The primary structure comprises 480 residues: Sulfate adenylyltransferase subunit 1 (480 aa).

In terms of domain architecture, tr-type G spans 30-248 (KGLLRFLTCG…TVDVKKEASK (219 aa)). The segment at 39 to 46 (GSVDDGKS) is G1. GTP is bound at residue 39 to 46 (GSVDDGKS). The G2 stretch occupies residues 97 to 101 (GITID). The tract at residues 118–121 (DTPG) is G3. GTP contacts are provided by residues 118–122 (DTPGH) and 173–176 (NKMD). The interval 173-176 (NKMD) is G4. The interval 211–213 (SAL) is G5.

The protein belongs to the TRAFAC class translation factor GTPase superfamily. Classic translation factor GTPase family. CysN/NodQ subfamily. In terms of assembly, heterodimer composed of CysD, the smaller subunit, and CysN.

The catalysed reaction is sulfate + ATP + H(+) = adenosine 5'-phosphosulfate + diphosphate. Its pathway is sulfur metabolism; hydrogen sulfide biosynthesis; sulfite from sulfate: step 1/3. With CysD forms the ATP sulfurylase (ATPS) that catalyzes the adenylation of sulfate producing adenosine 5'-phosphosulfate (APS) and diphosphate, the first enzymatic step in sulfur assimilation pathway. APS synthesis involves the formation of a high-energy phosphoric-sulfuric acid anhydride bond driven by GTP hydrolysis by CysN coupled to ATP hydrolysis by CysD. The protein is Sulfate adenylyltransferase subunit 1 of Photorhabdus laumondii subsp. laumondii (strain DSM 15139 / CIP 105565 / TT01) (Photorhabdus luminescens subsp. laumondii).